Consider the following 300-residue polypeptide: Probable phytol kinase, chloroplastic (300 aa).

Residues 1–36 (MAAARPALPSSPTSLLLARSTSAPDLAARRPRRWLV) constitute a chloroplast transit peptide. A run of 7 helical transmembrane segments spans residues 60–78 (LLRD…YSLV), 98–118 (VVHV…SNST), 122–142 (FFAA…GLGF), 168–188 (YVIV…IGIV), 227–247 (FISG…LGYI), 254–274 (ALGK…IPVT), and 276–296 (VVDD…LLFG).

This sequence belongs to the polyprenol kinase family.

It is found in the plastid. The protein localises to the chloroplast membrane. It carries out the reaction phytol + CTP = phytyl phosphate + CDP + H(+). Its pathway is cofactor biosynthesis; tocopherol biosynthesis. Involved in the activation and reutilization of phytol from chlorophyll degradation in plant metabolism, including tocopherol biosynthesis. Catalyzes the conversion of phytol to phytol monophosphate (PMP). The polypeptide is Probable phytol kinase, chloroplastic (Triticum aestivum (Wheat)).